The sequence spans 261 residues: MASADWGYGSENGPDQWSKLYPIANGNNQSPIDIKTSEANHDSSLKPLSISYNPATAKEIVNVGHSFHVIFDDSSNQSVLKGGPLADSYRLTQFHFHWGNSNDHGSEHTVDGTRYSGELHLVHWNSAKYSSASEAISKADGLAILGVLMKVGPANPSLQKVLDALNSVKTKGKRAPFTNFDPSSLLPSSLDYWTYFGSLTHPPLHESVTWVICKDSISLSPEQLAQLRGLLSSAEGEPAVPVLSNHRPPQPLKGRTVRASF.

Ala2 bears the N-acetylalanine mark. An Alpha-carbonic anhydrase domain is found at 4-261 (ADWGYGSENG…LKGRTVRASF (258 aa)). The active-site Proton donor/acceptor is the His65. Residues His95, His97, and His120 each contribute to the Zn(2+) site. Substrate contacts are provided by residues Thr200 and 200–201 (TH). The interval 239 to 261 (AVPVLSNHRPPQPLKGRTVRASF) is disordered.

Belongs to the alpha-carbonic anhydrase family. Zn(2+) is required as a cofactor.

The protein resides in the cytoplasm. The enzyme catalyses hydrogencarbonate + H(+) = CO2 + H2O. It carries out the reaction urea = cyanamide + H2O. Inhibited by acetazolamide. Catalyzes the reversible hydration of carbon dioxide. Can hydrate cyanamide to urea. This chain is Carbonic anhydrase 1 (Ca1), found in Mus musculus (Mouse).